Here is a 187-residue protein sequence, read N- to C-terminus: Lysozyme 3 (187 aa).

The first 18 residues, 1–18 (MNGLFLFCVATTAALAYG), serve as a signal peptide directing secretion. An I-type lysozyme domain is found at 68–183 (TGIVSQQCLQ…WSHVHAQGCS (116 aa)). Cystine bridges form between C75/C151, C80/C86, C91/C100, C113/C133, C123/C129, and C147/C165. The active-site Proton donor is the E83. The Nucleophile role is filled by D94. 106-112 (KEGYWHD) provides a ligand contact to substrate. Substrate contacts are provided by residues Y137 and 158 to 160 (HNG).

As to expression, highest levels of expression detected in the digestive glands. Lower levels in the mantle, labial palps, gills and style-midgut sac, and lowest levels detected in the hemocytes. Not detected in the gonads.

The protein resides in the secreted. The catalysed reaction is Hydrolysis of (1-&gt;4)-beta-linkages between N-acetylmuramic acid and N-acetyl-D-glucosamine residues in a peptidoglycan and between N-acetyl-D-glucosamine residues in chitodextrins.. Functionally, has antibacterial activity against the Gram-negative bacterium E.coli. No antibacterial activity detected against the Gram-negative bacterium V.vulnificus. In Crassostrea virginica (Eastern oyster), this protein is Lysozyme 3.